We begin with the raw amino-acid sequence, 200 residues long: Small ribosomal subunit protein uS2 (200 aa).

This sequence belongs to the universal ribosomal protein uS2 family.

The sequence is that of Small ribosomal subunit protein uS2 from Picrophilus torridus (strain ATCC 700027 / DSM 9790 / JCM 10055 / NBRC 100828 / KAW 2/3).